The chain runs to 170 residues: Adenine phosphoribosyltransferase (170 aa).

The protein belongs to the purine/pyrimidine phosphoribosyltransferase family. Homodimer.

The protein resides in the cytoplasm. The enzyme catalyses AMP + diphosphate = 5-phospho-alpha-D-ribose 1-diphosphate + adenine. The protein operates within purine metabolism; AMP biosynthesis via salvage pathway; AMP from adenine: step 1/1. Catalyzes a salvage reaction resulting in the formation of AMP, that is energically less costly than de novo synthesis. The polypeptide is Adenine phosphoribosyltransferase (Bacillus mycoides (strain KBAB4) (Bacillus weihenstephanensis)).